Reading from the N-terminus, the 197-residue chain is Imidazoleglycerol-phosphate dehydratase (197 aa).

The protein belongs to the imidazoleglycerol-phosphate dehydratase family.

Its subcellular location is the cytoplasm. It catalyses the reaction D-erythro-1-(imidazol-4-yl)glycerol 3-phosphate = 3-(imidazol-4-yl)-2-oxopropyl phosphate + H2O. The protein operates within amino-acid biosynthesis; L-histidine biosynthesis; L-histidine from 5-phospho-alpha-D-ribose 1-diphosphate: step 6/9. The chain is Imidazoleglycerol-phosphate dehydratase from Methylococcus capsulatus (strain ATCC 33009 / NCIMB 11132 / Bath).